A 181-amino-acid chain; its full sequence is Crossover junction endodeoxyribonuclease RuvC (181 aa).

Catalysis depends on residues aspartate 8, glutamate 67, and aspartate 139. Mg(2+) is bound by residues aspartate 8, glutamate 67, and aspartate 139.

It belongs to the RuvC family. As to quaternary structure, homodimer which binds Holliday junction (HJ) DNA. The HJ becomes 2-fold symmetrical on binding to RuvC with unstacked arms; it has a different conformation from HJ DNA in complex with RuvA. In the full resolvosome a probable DNA-RuvA(4)-RuvB(12)-RuvC(2) complex forms which resolves the HJ. The cofactor is Mg(2+).

The protein localises to the cytoplasm. The enzyme catalyses Endonucleolytic cleavage at a junction such as a reciprocal single-stranded crossover between two homologous DNA duplexes (Holliday junction).. In terms of biological role, the RuvA-RuvB-RuvC complex processes Holliday junction (HJ) DNA during genetic recombination and DNA repair. Endonuclease that resolves HJ intermediates. Cleaves cruciform DNA by making single-stranded nicks across the HJ at symmetrical positions within the homologous arms, yielding a 5'-phosphate and a 3'-hydroxyl group; requires a central core of homology in the junction. The consensus cleavage sequence is 5'-(A/T)TT(C/G)-3'. Cleavage occurs on the 3'-side of the TT dinucleotide at the point of strand exchange. HJ branch migration catalyzed by RuvA-RuvB allows RuvC to scan DNA until it finds its consensus sequence, where it cleaves and resolves the cruciform DNA. In Acinetobacter baylyi (strain ATCC 33305 / BD413 / ADP1), this protein is Crossover junction endodeoxyribonuclease RuvC.